A 1466-amino-acid chain; its full sequence is DNA-directed RNA polymerase subunit beta'' (1466 aa).

The Zn(2+) site is built by cysteine 220, cysteine 296, cysteine 303, and cysteine 306. The disordered stretch occupies residues 618-725 (TREEDLEDEY…EDEYDSSEED (108 aa)). Composition is skewed to acidic residues over residues 621–631 (EDLEDEYETLE), 639–651 (DEYE…DEYG), and 707–725 (LEED…SEED).

This sequence belongs to the RNA polymerase beta' chain family. RpoC2 subfamily. As to quaternary structure, in plastids the minimal PEP RNA polymerase catalytic core is composed of four subunits: alpha, beta, beta', and beta''. When a (nuclear-encoded) sigma factor is associated with the core the holoenzyme is formed, which can initiate transcription. The cofactor is Zn(2+).

The protein localises to the plastid. It localises to the chloroplast. The enzyme catalyses RNA(n) + a ribonucleoside 5'-triphosphate = RNA(n+1) + diphosphate. DNA-dependent RNA polymerase catalyzes the transcription of DNA into RNA using the four ribonucleoside triphosphates as substrates. This Agrostis stolonifera (Creeping bentgrass) protein is DNA-directed RNA polymerase subunit beta''.